A 328-amino-acid polypeptide reads, in one-letter code: Malate dehydrogenase (328 aa).

12–18 (GAAGQIG) provides a ligand contact to NAD(+). Substrate-binding residues include Arg93 and Arg99. NAD(+) contacts are provided by residues Asn106, Gln113, and 130–132 (TGN). Residues Asn132 and Arg163 each contribute to the substrate site. Catalysis depends on His188, which acts as the Proton acceptor.

It belongs to the LDH/MDH superfamily. MDH type 2 family.

The catalysed reaction is (S)-malate + NAD(+) = oxaloacetate + NADH + H(+). In terms of biological role, catalyzes the reversible oxidation of malate to oxaloacetate. This Kocuria rhizophila (strain ATCC 9341 / DSM 348 / NBRC 103217 / DC2201) protein is Malate dehydrogenase.